We begin with the raw amino-acid sequence, 186 residues long: Ribosome-recycling factor (186 aa).

Belongs to the RRF family.

It is found in the cytoplasm. Responsible for the release of ribosomes from messenger RNA at the termination of protein biosynthesis. May increase the efficiency of translation by recycling ribosomes from one round of translation to another. This chain is Ribosome-recycling factor, found in Coprothermobacter proteolyticus (strain ATCC 35245 / DSM 5265 / OCM 4 / BT).